The chain runs to 344 residues: Hyoscyamine 6-dioxygenase (344 aa).

In terms of domain architecture, Fe2OG dioxygenase spans 193 to 293; the sequence is QIQMMLTNYY…RVSIATLIGP (101 aa). Residues H217, D219, and H274 each contribute to the Fe cation site. R284 lines the 2-oxoglutarate pocket.

The protein belongs to the iron/ascorbate-dependent oxidoreductase family. As to quaternary structure, monomer. Fe(2+) is required as a cofactor. It depends on L-ascorbate as a cofactor. Post-translationally, the N-terminus is blocked. In terms of tissue distribution, root.

It catalyses the reaction L-hyoscyamine + 2-oxoglutarate + O2 = (6S)-6-hydroxyhyoscyamine + succinate + CO2. It functions in the pathway alkaloid biosynthesis; scopolamine biosynthesis. This is Hyoscyamine 6-dioxygenase (H6H) from Hyoscyamus niger (Black henbane).